A 210-amino-acid chain; its full sequence is DNA replication complex GINS protein PSF3 (210 aa).

This sequence belongs to the GINS3/PSF3 family. As to quaternary structure, component of the GINS complex which is a heterotetramer of gins1/psf1, gins2/psf2, gins3/psf3 and gins4/sld5. Component of the CMG helicase complex, composed of the mcm2-7 complex, the GINS complex and cdc45.

Its subcellular location is the nucleus. The protein localises to the chromosome. Required for correct functioning of the GINS complex, a complex that plays an essential role in the initiation of DNA replication, and progression of DNA replication forks. GINS complex is a core component of CDC45-MCM-GINS (CMG) helicase, the molecular machine that unwinds template DNA during replication, and around which the replisome is built. In Xenopus laevis (African clawed frog), this protein is DNA replication complex GINS protein PSF3.